A 275-amino-acid chain; its full sequence is 2,3,4,5-tetrahydropyridine-2,6-dicarboxylate N-succinyltransferase (275 aa).

Arg-106 and Asp-143 together coordinate substrate.

It belongs to the transferase hexapeptide repeat family. Homotrimer.

The protein resides in the cytoplasm. It carries out the reaction (S)-2,3,4,5-tetrahydrodipicolinate + succinyl-CoA + H2O = (S)-2-succinylamino-6-oxoheptanedioate + CoA. Its pathway is amino-acid biosynthesis; L-lysine biosynthesis via DAP pathway; LL-2,6-diaminopimelate from (S)-tetrahydrodipicolinate (succinylase route): step 1/3. The chain is 2,3,4,5-tetrahydropyridine-2,6-dicarboxylate N-succinyltransferase from Rickettsia bellii (strain RML369-C).